Here is a 160-residue protein sequence, read N- to C-terminus: Putative antiporter subunit mnhE2 (160 aa).

The next 3 helical transmembrane spans lie at 22–42 (SFQF…IYIL), 61–81 (FLGV…NYIL), and 102–122 (WAIT…VIRI).

It belongs to the CPA3 antiporters (TC 2.A.63) subunit E family. May form a heterooligomeric complex that consists of seven subunits: mnhA2, mnhB2, mnhC2, mnhD2, mnhE2, mnhF2 and mnhG2.

It is found in the cell membrane. The chain is Putative antiporter subunit mnhE2 (mnhE2) from Staphylococcus haemolyticus (strain JCSC1435).